The following is a 393-amino-acid chain: Protein TsgA (393 aa).

Transmembrane regions (helical) follow at residues 11-31, 51-71, 78-98, 101-121, 134-154, 162-182, 206-226, 245-265, 273-293, 298-318, 332-352, and 361-381; these read WISF…GMVM, FLNA…EIVP, FGFI…SLAL, AAMF…TFLI, LLFT…VAAF, WYWV…LTFG, IGVL…LGFI, ALVS…SFIL, ILTV…TGTQ, WFIL…ITLG, FILT…GPIV, and LLTA…LGFV.

This sequence belongs to the major facilitator superfamily. TsgA family.

It localises to the cell inner membrane. The polypeptide is Protein TsgA (Salmonella heidelberg (strain SL476)).